A 73-amino-acid polypeptide reads, in one-letter code: MKPEIHPVYPPSRVTCMCGNVVETKSTRGSFSVEICSNCHPFFTGKYKLVDTAGRIDRFRKKYGASPTSAKKA.

Residues Cys16, Cys18, Cys36, and Cys39 each contribute to the Zn(2+) site.

The protein belongs to the bacterial ribosomal protein bL31 family. Type A subfamily. As to quaternary structure, part of the 50S ribosomal subunit. Zn(2+) is required as a cofactor.

Binds the 23S rRNA. In Myxococcus xanthus (strain DK1622), this protein is Large ribosomal subunit protein bL31.